The following is a 403-amino-acid chain: Shaggy-related protein kinase GSK4 (403 aa).

The Protein kinase domain maps to Tyr71–Phe355. Residues Val77 to Val85 and Lys100 contribute to the ATP site. Asp196 serves as the catalytic Proton acceptor.

This sequence belongs to the protein kinase superfamily. CMGC Ser/Thr protein kinase family. GSK-3 subfamily. In terms of assembly, interacts with LIC.

It carries out the reaction L-seryl-[protein] + ATP = O-phospho-L-seryl-[protein] + ADP + H(+). It catalyses the reaction L-threonyl-[protein] + ATP = O-phospho-L-threonyl-[protein] + ADP + H(+). Functionally, probable serine-threonine kinase that may regulate brassinosteroid signaling. This is Shaggy-related protein kinase GSK4 from Oryza sativa subsp. japonica (Rice).